An 87-amino-acid polypeptide reads, in one-letter code: Small ribosomal subunit protein uS17 (87 aa).

Belongs to the universal ribosomal protein uS17 family. In terms of assembly, part of the 30S ribosomal subunit.

In terms of biological role, one of the primary rRNA binding proteins, it binds specifically to the 5'-end of 16S ribosomal RNA. This is Small ribosomal subunit protein uS17 from Bacillus pumilus (strain SAFR-032).